The sequence spans 202 residues: Matrix protein (202 aa).

Positions 35–38 match the PPXY motif motif; it reads PPEY. Residues 115–151 form an essential for glycoprotein binding region; that stretch reads KLRRTFIFQWADSRGPLEGEELEYSQEITWDDDTEFV.

This sequence belongs to the lyssavirus matrix protein family. As to quaternary structure, homomultimer. Interacts with nucleoprotein and with the cytoplasmic domain of glycoprotein. Interacts with host ATP6V1A; this interaction plays an important role in virion uncoating after viral entry.

It is found in the virion membrane. Its subcellular location is the host endomembrane system. It localises to the host cytoplasm. Plays a major role in assembly, budding and uncoating of virion after membrane fusion. Completely covers the ribonucleoprotein coil and keep it in condensed bullet-shaped form. Inhibits viral transcription and stimulates replication. Plays a major role in early induction of TRAIL-mediated apoptosis in infected neurons. Inhibits the integrated stress response (ISR) in the infected cell by blocking the formation of stress granules. This chain is Matrix protein (M), found in Rabies virus (strain ERA) (RABV).